The primary structure comprises 129 residues: ATP synthase epsilon chain (129 aa).

This sequence belongs to the ATPase epsilon chain family. F-type ATPases have 2 components, CF(1) - the catalytic core - and CF(0) - the membrane proton channel. CF(1) has five subunits: alpha(3), beta(3), gamma(1), delta(1), epsilon(1). CF(0) has three main subunits: a, b and c.

The protein resides in the cell inner membrane. Its function is as follows. Produces ATP from ADP in the presence of a proton gradient across the membrane. The chain is ATP synthase epsilon chain from Campylobacter curvus (strain 525.92).